Here is a 136-residue protein sequence, read N- to C-terminus: Cell wall synthesis protein CwsA (136 aa).

A helical transmembrane segment spans residues 94–114 (LLIAAVAVTVLGGGAAAFSIV).

Belongs to the CwsA family. In terms of assembly, interacts with CrgA and Wag31.

Its subcellular location is the cell membrane. Functionally, required for regulated cell division, cell wall synthesis and the maintenance of cell shape. The protein is Cell wall synthesis protein CwsA of Mycolicibacterium smegmatis (strain ATCC 700084 / mc(2)155) (Mycobacterium smegmatis).